We begin with the raw amino-acid sequence, 182 residues long: 3-hydroxyanthranilate 3,4-dioxygenase (182 aa).

R46 lines the O2 pocket. The Fe cation site is built by H50, E56, and H96. A substrate-binding site is contributed by E56. R100 and E111 together coordinate substrate. 4 residues coordinate Fe cation: C126, C129, C163, and C166.

This sequence belongs to the 3-HAO family. In terms of assembly, homodimer. The cofactor is Fe(2+).

The catalysed reaction is 3-hydroxyanthranilate + O2 = (2Z,4Z)-2-amino-3-carboxymuconate 6-semialdehyde. It functions in the pathway cofactor biosynthesis; NAD(+) biosynthesis; quinolinate from L-kynurenine: step 3/3. Catalyzes the oxidative ring opening of 3-hydroxyanthranilate to 2-amino-3-carboxymuconate semialdehyde, which spontaneously cyclizes to quinolinate. The polypeptide is 3-hydroxyanthranilate 3,4-dioxygenase (Brucella anthropi (strain ATCC 49188 / DSM 6882 / CCUG 24695 / JCM 21032 / LMG 3331 / NBRC 15819 / NCTC 12168 / Alc 37) (Ochrobactrum anthropi)).